Here is a 109-residue protein sequence, read N- to C-terminus: uncharacterized protein (109 aa).

The helical transmembrane segment at 90-107 (IICNFWGSLLGVGIAFYQ) threads the bilayer.

The protein localises to the membrane. This is an uncharacterized protein from Saccharomyces cerevisiae (strain ATCC 204508 / S288c) (Baker's yeast).